The following is a 125-amino-acid chain: Large ribosomal subunit protein bL20 (125 aa).

The protein belongs to the bacterial ribosomal protein bL20 family.

Functionally, binds directly to 23S ribosomal RNA and is necessary for the in vitro assembly process of the 50S ribosomal subunit. It is not involved in the protein synthesizing functions of that subunit. The polypeptide is Large ribosomal subunit protein bL20 (Methylobacterium radiotolerans (strain ATCC 27329 / DSM 1819 / JCM 2831 / NBRC 15690 / NCIMB 10815 / 0-1)).